A 523-amino-acid chain; its full sequence is GMP synthase [glutamine-hydrolyzing] (523 aa).

Residues 8 to 205 (KILILDFGSQ…VVNICGCETK (198 aa)) enclose the Glutamine amidotransferase type-1 domain. The Nucleophile role is filled by cysteine 85. Catalysis depends on residues histidine 179 and glutamate 181. The 193-residue stretch at 206–398 (WTAENIIEDA…LGLPAEMINR (193 aa)) folds into the GMPS ATP-PPase domain. 233-239 (SGGVDSS) is a binding site for ATP.

Homodimer.

It catalyses the reaction XMP + L-glutamine + ATP + H2O = GMP + L-glutamate + AMP + diphosphate + 2 H(+). Its pathway is purine metabolism; GMP biosynthesis; GMP from XMP (L-Gln route): step 1/1. Its function is as follows. Catalyzes the synthesis of GMP from XMP. This Haemophilus influenzae (strain 86-028NP) protein is GMP synthase [glutamine-hydrolyzing].